Reading from the N-terminus, the 298-residue chain is Cell wall protein DAN1 (298 aa).

The signal sequence occupies residues 1–19; that stretch reads MSRISILAVAAALVASATA. The segment at 122 to 168 is disordered; the sequence is PASTTEASSTSTSEASSAATESSSSSESSAETSSNAASTQATVSSES. Asn-275 carries GPI-anchor amidated asparagine lipidation. Residues 276 to 298 constitute a propeptide, removed in mature form; it reads GANKFNNGVFGAAAIAGAAALLL.

Belongs to the SRP1/TIP1 family. Extensively O-glycosylated. Post-translationally, the GPI-anchor is attached to the protein in the endoplasmic reticulum and serves to target the protein to the cell surface. There, the glucosamine-inositol phospholipid moiety is cleaved off and the GPI-modified mannoprotein is covalently attached via its lipidless GPI glycan remnant to the 1,6-beta-glucan of the outer cell wall layer.

It is found in the secreted. The protein resides in the cell wall. The protein localises to the membrane. Its function is as follows. Component of the cell wall. The protein is Cell wall protein DAN1 (DAN1) of Saccharomyces cerevisiae (strain ATCC 204508 / S288c) (Baker's yeast).